A 623-amino-acid polypeptide reads, in one-letter code: Leucine aminopeptidase 2 (623 aa).

A peptide is bound by residues 136 to 138 and 261 to 266; these read QCE and PYGGME. His290 contacts Zn(2+). Catalysis depends on Glu291, which acts as the Proton acceptor. 2 residues coordinate Zn(2+): His294 and Glu313. The Proton donor role is filled by Tyr391.

It belongs to the peptidase M1 family. Zn(2+) is required as a cofactor.

The protein localises to the cytoplasm. Its subcellular location is the nucleus. It catalyses the reaction an epoxide + H2O = an ethanediol. Functionally, aminopeptidase that preferentially cleaves di- and tripeptides. Also has low epoxide hydrolase activity (in vitro). Can hydrolyze the epoxide leukotriene LTA(4) but it forms preferentially 5,6-dihydroxy-7,9,11,14-eicosatetraenoic acid rather than the cytokine leukotriene B(4) as the product compared to the homologous mammalian enzyme (in vitro). The protein is Leucine aminopeptidase 2 (LKH1) of Candida albicans (strain SC5314 / ATCC MYA-2876) (Yeast).